The following is a 294-amino-acid chain: tRNA dimethylallyltransferase (294 aa).

10–17 (GPTAVGKT) is an ATP binding site. A substrate-binding site is contributed by 12–17 (TAVGKT). The segment at 35-38 (DSQQ) is interaction with substrate tRNA.

The protein belongs to the IPP transferase family. In terms of assembly, monomer. Mg(2+) is required as a cofactor.

The enzyme catalyses adenosine(37) in tRNA + dimethylallyl diphosphate = N(6)-dimethylallyladenosine(37) in tRNA + diphosphate. Its function is as follows. Catalyzes the transfer of a dimethylallyl group onto the adenine at position 37 in tRNAs that read codons beginning with uridine, leading to the formation of N6-(dimethylallyl)adenosine (i(6)A). In Streptococcus gordonii (strain Challis / ATCC 35105 / BCRC 15272 / CH1 / DL1 / V288), this protein is tRNA dimethylallyltransferase.